Here is an 84-residue protein sequence, read N- to C-terminus: Tripartite terminase subunit 2 (84 aa).

Belongs to the herpesviridae TRM2 protein family. As to quaternary structure, associates with TRM1 and TRM3 to form the tripartite terminase complex.

It is found in the host nucleus. Component of the molecular motor that translocates viral genomic DNA in empty capsid during DNA packaging. Forms a tripartite terminase complex together with TRM1 and TRM3 in the host cytoplasm. Once the complex reaches the host nucleus, it interacts with the capsid portal vertex. This portal forms a ring in which genomic DNA is translocated into the capsid. The polypeptide is Tripartite terminase subunit 2 (Alcelaphine herpesvirus 1 (strain C500) (AlHV-1)).